The sequence spans 535 residues: Atrial natriuretic peptide receptor 3 (535 aa).

The N-terminal stretch at 1 to 26 (MRSLLLFTFSACVLLARALLAGGASS) is a signal peptide. Positions 27 to 40 (GGGDTGPGNRRRER) are excised as a propeptide. Residues 41-477 (EALAAQKIEV…CKSCGLEESA (437 aa)) are Extracellular-facing. The N-linked (GlcNAc...) asparagine glycan is linked to Asn81. Disulfide bonds link Cys103–Cys131 and Cys208–Cys256. Residues Asn288 and Asn389 are each glycosylated (N-linked (GlcNAc...) asparagine). A helical membrane pass occupies residues 478-498 (VTGIVVGALLGAGLLMAFYFF). The Cytoplasmic portion of the chain corresponds to 499–535 (RKKYRITIERRNHQEESNIGKHRELREDSIRSHFSVA).

Belongs to the ANF receptor family. Homodimer; disulfide-linked. Interacts with OSTN.

The protein resides in the cell membrane. Receptor for the natriuretic peptide hormones, binding with similar affinities atrial natriuretic peptide NPPA/ANP, brain natriuretic peptide NPPB/BNP, and C-type natriuretic peptide NPPC/CNP. May function as a clearance receptor for NPPA, NPPB and NPPC, regulating their local concentrations and effects. Acts as a regulator of osteoblast differentiation and bone growth by binding to its ligand osteocrin, thereby preventing binding between NPR3/NPR-C and natriuretic peptides, leading to increase cGMP production. The protein is Atrial natriuretic peptide receptor 3 (Npr3) of Rattus norvegicus (Rat).